Reading from the N-terminus, the 573-residue chain is Protein FAM200A (573 aa).

The disordered stretch occupies residues 1–51 (MTPESRDTTDLSPGGTQEMEGIVIVKVEEEDEEDHFQKERNKVESSPQVLS). Residues 1–513 (MTPESRDTTD…DDFPLLSRKS (513 aa)) lie on the Extracellular side of the membrane. The chain crosses the membrane as a helical span at residues 514 to 533 (ILLLLPFTTTYLCELGFSIL). Residues 534 to 573 (TRLKTKKRNRLNSAPDMRVALSSCVPDWKELMNRQAHPSH) lie on the Cytoplasmic side of the membrane.

Belongs to the FAM200 family.

It is found in the membrane. This is Protein FAM200A (FAM200A) from Homo sapiens (Human).